We begin with the raw amino-acid sequence, 1183 residues long: MNPHGGGNQMREPALPAAVGAELERLEARLGQLACAEARRQLAELGEPAAARVLRAIGEARQVRTLSGFIRHMANQERMKRNARGIPTAHSAACISGPCREEESISTPLYYNEVQMDAQTPNDMVEVGSPNQQMPLRLHDNGGSVGHIARVVPDLANPAVGSPYGRISSVLLQNQNCVEGYTPSRGMVSPASNQVGSPGHRMPSGLQRHMEIDSPIQPIVSTPERVSTPSPVRDLSRCVENMAGPSGSPPCPIWVMPQIPPAICPDTTNVLREVVSPQMLALGELEFRKIFMIFAYLSWNKKGVKPPLSTPKSSKIEDVLSVDSIRSLKSMSMAQFESRIWSTFGHDNISSSDRAKNLDSGPGMSKVYHCNVEIRGGTVVKIFKGPYIENRRTHLQKVLGDDNVLVVKFMEISSDTETDLSTYLEHYHKVAEEGIVLGLRCYRFFLYKDGGKENKMKEENREEENKKCTSSVRCYFVRTESGWNMDEPYILSGRTIGQARDLFMHIRTVLTLAKYMLRFALIVSKTITLDVDLSEVLVKLIDDEPCLDEHGKEVFRDGERLIHTDGTGLISEDLAQKCTYSNSKGKLLEPQDIVDCAASKLMGSNNTTEYPLLIQLRLFYNGSAVKGTVLVDKRLPPRTIHIRPSMLKIKTYPELSGVQSVNSLDIVSARNAKKSLSGVQSVNSFEIVSTSNRSGRTFTSNNLIALLHYGGVPEEFFMELLQTAIEEADNARFDYAGALNIAFNYADMEDSMPARMILSGIPLEESYLQSRLDFLSLLERKGIKNGKIPIDDCYYLMGTADPTGKLGPNEVCVILDYGQVSGDVLVYKYPGLHPGDIHVLKATYSSDIEKVVGNSKHAILFPTTGQRSLADEMANSDFDGDIYWVSLNPKLLEHFKPSKPWVPAITPNGTKQKGPEDFNESELERVLFHEFLKTRFAPSYARATAATNWLVYMDRLLTVSLDESEKKLIEKKMLKLVDLYYLALDAPKMGNKVNIPRDLMVKQYPHFMDRSPSYHSSSILGKIYDKAGDPKPLRSDNVQPTSISSLPCFAERDVPPAIKQLWQHRYNEYLADSSLLYAEEADEEEKKIKFQELYEKYKHLLYGASEFEETPRDLDDVFSEACAIYQIAYEKARSANNVARCGFAWKVAGRALCHFYTVKNEGNAVVCSLQLLRNFRFTKKYRK.

It belongs to the RdRP family. In terms of tissue distribution, expressed in shoot apical meristem (SAM) and panicles.

It carries out the reaction RNA(n) + a ribonucleoside 5'-triphosphate = RNA(n+1) + diphosphate. Functionally, probably involved in the RNA silencing pathway and required for the generation of small interfering RNAs (siRNAs). The sequence is that of Probable RNA-dependent RNA polymerase 4 (RDR4) from Oryza sativa subsp. japonica (Rice).